A 455-amino-acid polypeptide reads, in one-letter code: tRNA modification GTPase MnmE (455 aa).

3 residues coordinate (6S)-5-formyl-5,6,7,8-tetrahydrofolate: Arg-26, Glu-86, and Arg-125. The region spanning 222–376 is the TrmE-type G domain; sequence GLKTAIIGRP…VEEKINQIFF (155 aa). Asn-232 contacts K(+). GTP is bound by residues 232–237, 251–257, and 276–279; these read NVGKSS, TDIAGTT, and DTAG. Ser-236 contributes to the Mg(2+) binding site. Thr-251, Ile-253, and Thr-256 together coordinate K(+). Thr-257 contributes to the Mg(2+) binding site. Lys-455 contacts (6S)-5-formyl-5,6,7,8-tetrahydrofolate.

It belongs to the TRAFAC class TrmE-Era-EngA-EngB-Septin-like GTPase superfamily. TrmE GTPase family. In terms of assembly, homodimer. Heterotetramer of two MnmE and two MnmG subunits. K(+) is required as a cofactor.

It localises to the cytoplasm. Its function is as follows. Exhibits a very high intrinsic GTPase hydrolysis rate. Involved in the addition of a carboxymethylaminomethyl (cmnm) group at the wobble position (U34) of certain tRNAs, forming tRNA-cmnm(5)s(2)U34. In Lactococcus lactis subsp. cremoris (strain SK11), this protein is tRNA modification GTPase MnmE.